The sequence spans 473 residues: FAD-dependent oxidoreductase dpchF (473 aa).

An N-terminal signal peptide occupies residues 1–21 (MKLSFIASPVWALALAQFAAA). 5 N-linked (GlcNAc...) asparagine glycosylation sites follow: N98, N128, N181, N262, and N330.

It belongs to the beta-cyclopiazonate dehydrogenase family. Requires FAD as cofactor.

It participates in secondary metabolite biosynthesis; terpenoid biosynthesis. Its function is as follows. FAD-dependent oxidoreductase; part of the gene cluster that mediates the biosynthesis of the diterpenoid pyrones higginsianins A and B. The first step of the pathway is the synthesis of the alpha-pyrone moiety by the polyketide synthase dpchA via condensation of one acetyl-CoA starter unit with 3 malonyl-CoA units and 2 methylations. The alpha-pyrone is then combined with geranylgeranyl pyrophosphate (GGPP) formed by the GGPP synthase dpchD through the action of the prenyltransferase dpchC to yield a linear alpha-pyrone diterpenoid. Subsequent steps in the diterpenoid pyrone biosynthetic pathway involve the decalin core formation, which is initiated by the epoxidation of the C10-C11 olefin by the FAD-dependent oxidoreductase dpchE, and is followed by a cyclization cascade catalyzed by the terpene cyclase dpchB. The short chain dehydrogenase/reductase dpchG then oxidizes the 8S hydroxy group to a ketone and the short chain dehydrogenase/reductase dpchH reduces the ketone to the 8R hydroxy group to yield higginsianin B. Finally, the FAD-dependent oxidoreductase dpchF converts higginsianin B into higginsianin A. The chain is FAD-dependent oxidoreductase dpchF from Colletotrichum higginsianum (strain IMI 349063) (Crucifer anthracnose fungus).